A 68-amino-acid chain; its full sequence is conotoxin S11.3 (68 aa).

Positions 1 to 26 are cleaved as a signal peptide; it reads MMFRLTSVSCFLLVIVCLNLFQVVLT. 4 disulfides stabilise this stretch: Cys29–Cys43, Cys36–Cys48, Cys42–Cys52, and Cys47–Cys56. Tyr60 is modified (tyrosine amide). A propeptide spanning residues 64-68 is cleaved from the precursor; that stretch reads ATFQE.

This sequence belongs to the conotoxin I2 superfamily. As to expression, expressed by the venom duct.

Its subcellular location is the secreted. The chain is conotoxin S11.3 from Conus striatus (Striated cone).